Reading from the N-terminus, the 146-residue chain is MQKKITIYTDGACSGNPGKGGWGAMLMYGDAVRELSGYSPATTNNRMELTAAIEALRALKEPCSVALYSDSSYVVNAFREGWLDRWTRNNWKTAAKKNVENTDLWKQILELTARHTVTFHKVKGHSDNPYNNRCDELARQAIQKKP.

An RNase H type-1 domain is found at 1–143 (MQKKITIYTD…CDELARQAIQ (143 aa)). Asp-10, Glu-48, Asp-70, and Asp-135 together coordinate Mg(2+).

Belongs to the RNase H family. In terms of assembly, monomer. Mg(2+) is required as a cofactor.

Its subcellular location is the cytoplasm. It catalyses the reaction Endonucleolytic cleavage to 5'-phosphomonoester.. Its function is as follows. Endonuclease that specifically degrades the RNA of RNA-DNA hybrids. This chain is Ribonuclease H, found in Chlorobium luteolum (strain DSM 273 / BCRC 81028 / 2530) (Pelodictyon luteolum).